Here is a 370-residue protein sequence, read N- to C-terminus: Forkhead box protein I1-A (370 aa).

Disordered stretches follow at residues 1-28, 212-269, and 342-370; these read MNPV…AQEA, DNGN…CPSP, and SSLP…QGRY. A DNA-binding region (fork-head) is located at residues 127–221; it reads RPPYSYSALI…DNGNFRRKRK (95 aa). Positions 232 to 245 are enriched in basic and acidic residues; that stretch reads AKREEDHVSPKGKE. Over residues 349–370 the composition is skewed to low complexity; that stretch reads QKQPPYLQQLHPQQSPLYQGRY.

In terms of tissue distribution, initially localized to the animal hemisphere (the presumptive ectoderm) of early-mid blastula embryos. Becomes restricted to head placodes, excluding the otic placodes, by the tailbud stages.

It localises to the nucleus. Transcription factor. Essential for ventral specification of the early cephalic (head) ectoderm during gastrulation, playing a role in the non-neural versus neural cell fate choice. Binds to DNA via the target sequence 5'-[AG]TAAA[CT]A-3', with 5'-ATAAACA-3' being the preferred binding site. The sequence is that of Forkhead box protein I1-A (foxi1-a) from Xenopus laevis (African clawed frog).